The primary structure comprises 384 residues: Glucose-fructose oxidoreductase domain-containing protein 2 (384 aa).

The first 25 residues, 1–25, serve as a signal peptide directing secretion; that stretch reads MMTLPGIGVFGTGNTARVLIQLLRA. The interval 358–384 is disordered; that stretch reads GEWESVELTNEETDSNQNLSEVIQHNL. Polar residues predominate over residues 372–384; the sequence is SNQNLSEVIQHNL.

Belongs to the Gfo/Idh/MocA family.

The protein resides in the secreted. The protein localises to the extracellular space. It is found in the extracellular matrix. Promotes matrix assembly. This chain is Glucose-fructose oxidoreductase domain-containing protein 2 (gfod2), found in Xenopus laevis (African clawed frog).